The following is an 887-amino-acid chain: Phosphatidylinositol 3-kinase catalytic subunit type 3 (887 aa).

The region spanning 35 to 184 is the C2 PI3K-type domain; the sequence is YKAVLEDPML…LAKLTKAHRQ (150 aa). A disordered region spans residues 149-170; it reads VEADGSEPTKTPGRTSSTLSED. Residues 156–170 show a composition bias toward polar residues; that stretch reads PTKTPGRTSSTLSED. At threonine 163 the chain carries Phosphothreonine; by AMPK. Serine 165 bears the Phosphoserine; by AMPK mark. Phosphoserine is present on residues serine 244, serine 261, and serine 282. The region spanning 283 to 520 is the PIK helical domain; the sequence is DHDLKPNAAT…PKTHEMYLNV (238 aa). Residues 447-467 form a disordered region; that stretch reads TSPLPSVSSPPPASKTKEVPD. The PI3K/PI4K catalytic domain maps to 605-871; the sequence is IPETATLFKS…LIDESVHALF (267 aa). Residues 611–617 are G-loop; that stretch reads LFKSALM. Residues 740–748 form a catalytic loop region; that stretch reads GVGDRHLDN. An activation loop region spans residues 759–780; the sequence is HIDFGYILGRDPKPLPPPMKLN.

It belongs to the PI3/PI4-kinase family. In terms of assembly, component of the PI3K (PI3KC3/PI3K-III/class III phosphatidylinositol 3-kinase) complex the core of which is composed of the catalytic subunit PIK3C3, the regulatory subunit PIK3R4 and BECN1 associating with additional regulatory/auxiliary subunits to form alternative complex forms. Alternative complex forms containing a fourth regulatory subunit in a mutually exclusive manner are: the PI3K complex I (PI3KC3-C1) containing ATG14, and the PI3K complex II (PI3KC3-C2) containing UVRAG. PI3KC3-C1 displays a V-shaped architecture with PIK3R4 serving as a bridge between PIK3C3 and the ATG14:BECN1 subcomplex. Both, PI3KC3-C1 and PI3KC3-C2, can associate with further regulatory subunits such as RUBCN, SH3GLB1/Bif-1 and AMBRA1. PI3KC3-C1 probably associates with PIK3CB. Interacts with RAB7A in the presence of PIK3R4. Interacts with AMBRA1. Interacts with BECN1P1/BECN2. Interacts with SLAMF1. May be a component of a complex composed of RAB5A (in GDP-bound form), DYN2 and PIK3C3. Interacts with NCKAP1L. Interacts with ATG14; this interaction is increased in the absence of TMEM39A. Interacts with STEEP1; the interaction is STING1-dependent and required for trafficking of STING1 from the endoplasmic reticulum. Interacts with YWHAG. Interacts with ARMC3. It depends on Mn(2+) as a cofactor. In terms of processing, ubiquitinated via 'Lys-29'- and 'Lys-48'-linked ubiquitination by UBE3C, promoting its degradation. Deubiquitination by ZRANB1/TRABID promotes its stabilization, leading to autophagosome maturation. Ubiquitously expressed, with a highest expression in skeletal muscle.

The protein resides in the midbody. It localises to the late endosome. Its subcellular location is the cytoplasmic vesicle. It is found in the autophagosome. The catalysed reaction is a 1,2-diacyl-sn-glycero-3-phospho-(1D-myo-inositol) + ATP = a 1,2-diacyl-sn-glycero-3-phospho-(1D-myo-inositol-3-phosphate) + ADP + H(+). Functionally, catalytic subunit of the PI3K complex that mediates formation of phosphatidylinositol 3-phosphate; different complex forms are believed to play a role in multiple membrane trafficking pathways: PI3KC3-C1 is involved in initiation of autophagosomes and PI3KC3-C2 in maturation of autophagosomes and endocytosis. As part of PI3KC3-C1, promotes endoplasmic reticulum membrane curvature formation prior to vesicle budding. Involved in regulation of degradative endocytic trafficking and required for the abscission step in cytokinesis, probably in the context of PI3KC3-C2. Involved in the transport of lysosomal enzyme precursors to lysosomes. Required for transport from early to late endosomes. Its function is as follows. (Microbial infection) Kinase activity is required for SARS coronavirus-2/SARS-CoV-2 replication. The sequence is that of Phosphatidylinositol 3-kinase catalytic subunit type 3 from Homo sapiens (Human).